Reading from the N-terminus, the 428-residue chain is Enolase (428 aa).

Glutamine 163 provides a ligand contact to (2R)-2-phosphoglycerate. Glutamate 205 (proton donor) is an active-site residue. Mg(2+) contacts are provided by aspartate 242, glutamate 285, and aspartate 312. (2R)-2-phosphoglycerate is bound by residues lysine 337, arginine 366, serine 367, and lysine 388. Residue lysine 337 is the Proton acceptor of the active site.

The protein belongs to the enolase family. Mg(2+) serves as cofactor.

The protein localises to the cytoplasm. It localises to the secreted. The protein resides in the cell surface. It carries out the reaction (2R)-2-phosphoglycerate = phosphoenolpyruvate + H2O. It participates in carbohydrate degradation; glycolysis; pyruvate from D-glyceraldehyde 3-phosphate: step 4/5. Catalyzes the reversible conversion of 2-phosphoglycerate (2-PG) into phosphoenolpyruvate (PEP). It is essential for the degradation of carbohydrates via glycolysis. This is Enolase from Rhodopirellula baltica (strain DSM 10527 / NCIMB 13988 / SH1).